Consider the following 430-residue polypeptide: Maltoporin (430 aa).

A signal peptide spans 1-23 (MNNKKTLLAVAISGMMFATSAAA).

Belongs to the porin LamB (TC 1.B.3) family. In terms of assembly, homotrimer formed of three 18-stranded antiparallel beta-barrels, containing three independent channels.

The protein resides in the cell outer membrane. It catalyses the reaction beta-maltose(in) = beta-maltose(out). In terms of biological role, involved in the transport of maltose and maltodextrins. The chain is Maltoporin from Actinobacillus succinogenes (strain ATCC 55618 / DSM 22257 / CCUG 43843 / 130Z).